Consider the following 1343-residue polypeptide: DNA-directed RNA polymerase subunit beta (1343 aa).

The protein belongs to the RNA polymerase beta chain family. The RNAP catalytic core consists of 2 alpha, 1 beta, 1 beta' and 1 omega subunit. When a sigma factor is associated with the core the holoenzyme is formed, which can initiate transcription.

It carries out the reaction RNA(n) + a ribonucleoside 5'-triphosphate = RNA(n+1) + diphosphate. Functionally, DNA-dependent RNA polymerase catalyzes the transcription of DNA into RNA using the four ribonucleoside triphosphates as substrates. The chain is DNA-directed RNA polymerase subunit beta from Shewanella pealeana (strain ATCC 700345 / ANG-SQ1).